We begin with the raw amino-acid sequence, 246 residues long: Phosphomannomutase (246 aa).

D9 acts as the Nucleophile in catalysis. Mg(2+) is bound by residues D9 and D11. D11 functions as the Proton donor/acceptor in the catalytic mechanism. The alpha-D-mannose 1-phosphate site is built by R121, R132, R139, S179, and D181. D207 is a binding site for Mg(2+).

It belongs to the eukaryotic PMM family. As to quaternary structure, homodimer.

Its subcellular location is the cytoplasm. The enzyme catalyses alpha-D-mannose 1-phosphate = D-mannose 6-phosphate. Its pathway is nucleotide-sugar biosynthesis; GDP-alpha-D-mannose biosynthesis; alpha-D-mannose 1-phosphate from D-fructose 6-phosphate: step 2/2. In terms of biological role, involved in the synthesis of the GDP-mannose and dolichol-phosphate-mannose required for a number of critical mannosyl transfer reactions. This chain is Phosphomannomutase (PMM), found in Babesia bovis.